We begin with the raw amino-acid sequence, 471 residues long: UDP-N-acetylmuramoylalanine--D-glutamate ligase (471 aa).

135–141 serves as a coordination point for ATP; it reads GTNGKTT.

It belongs to the MurCDEF family.

Its subcellular location is the cytoplasm. It catalyses the reaction UDP-N-acetyl-alpha-D-muramoyl-L-alanine + D-glutamate + ATP = UDP-N-acetyl-alpha-D-muramoyl-L-alanyl-D-glutamate + ADP + phosphate + H(+). Its pathway is cell wall biogenesis; peptidoglycan biosynthesis. Functionally, cell wall formation. Catalyzes the addition of glutamate to the nucleotide precursor UDP-N-acetylmuramoyl-L-alanine (UMA). This is UDP-N-acetylmuramoylalanine--D-glutamate ligase from Frankia casuarinae (strain DSM 45818 / CECT 9043 / HFP020203 / CcI3).